The sequence spans 464 residues: MMDKKCTLCFLFLLLLNMALIAAESEEGANQTDLGVTRNKIMTAQYECYQKIMQDPIQQGEGLYCNRTWDGWLCWNDVAAGTESMQYCPDYFQDFDPSEKVTKICDQDGNWFRHPDSNRTWTNYTLCNNSTHEKVKTALNLFYLTIIGHGLSIASLIISLIIFFYFKSLSCQRITLHKNLFFSFVCNSIVTIIHLTAVANNQALVATNPVSCKVSQFIHLYLMGCNYFWMLCEGIYLHTLIVVAVFAEKQHLMWYYFLGWGFPLLPACIHAIARSLYYNDNCWISSDTHLLYIIHGPICAALLVNLFFLLNIVRVLITKLKVTHQAESNLYMKAVRATLILVPLLGIEFVLFPWRPEGKVAEEVYDYVMHILMHYQGLLVSTIFCFFNGEVQAILRRNWNQYKIQFGNGFSHSDALRSASYTVSTISDVQGYSHDCPTEHLNGKSIQDIENVALKPEKMYDLVM.

Residues 1–23 (MMDKKCTLCFLFLLLLNMALIAA) form the signal peptide. The Extracellular segment spans residues 24-139 (ESEEGANQTD…STHEKVKTAL (116 aa)). N-linked (GlcNAc...) asparagine glycans are attached at residues asparagine 30, asparagine 66, asparagine 118, asparagine 123, asparagine 128, and asparagine 129. Intrachain disulfides connect cysteine 48-cysteine 74, cysteine 65-cysteine 105, and cysteine 88-cysteine 127. The chain crosses the membrane as a helical span at residues 140-164 (NLFYLTIIGHGLSIASLIISLIIFF). Residues 165–175 (YFKSLSCQRIT) are Cytoplasmic-facing. Residues 176 to 198 (LHKNLFFSFVCNSIVTIIHLTAV) form a helical membrane-spanning segment. Topologically, residues 199–209 (ANNQALVATNP) are extracellular. The helical transmembrane segment at 210–238 (VSCKVSQFIHLYLMGCNYFWMLCEGIYLH) threads the bilayer. The Cytoplasmic segment spans residues 239-252 (TLIVVAVFAEKQHL). A helical membrane pass occupies residues 253–273 (MWYYFLGWGFPLLPACIHAIA). Topologically, residues 274–289 (RSLYYNDNCWISSDTH) are extracellular. The segment at 288 to 289 (TH) is required for RAMP3 interaction. The chain crosses the membrane as a helical span at residues 290–314 (LLYIIHGPICAALLVNLFFLLNIVR). Topologically, residues 315–329 (VLITKLKVTHQAESN) are cytoplasmic. Residues 330–351 (LYMKAVRATLILVPLLGIEFVL) form a helical membrane-spanning segment. Residues 352–366 (FPWRPEGKVAEEVYD) lie on the Extracellular side of the membrane. Residues 367 to 387 (YVMHILMHYQGLLVSTIFCFF) form a helical membrane-spanning segment. The Cytoplasmic portion of the chain corresponds to 388–464 (NGEVQAILRR…KPEKMYDLVM (77 aa)). Serine 420 and serine 445 each carry phosphoserine.

This sequence belongs to the G-protein coupled receptor 2 family. In terms of assembly, heterodimer of CALCRL and RAMP1; the receptor complex functions as CGRP receptor. Heterodimer of CALCRL and RAMP2 or CALCRL and RAMP3; the complexes function as adrenomedullin receptor.

The protein localises to the cell membrane. G protein-coupled receptor which specificity is determined by its interaction with receptor-activity-modifying proteins (RAMPs). Together with RAMP1, form the receptor complex for calcitonin-gene-related peptides CALCA/CGRP1 and CALCB/CGRP2. Together with RAMP2 or RAMP3, function as receptor complexes for adrenomedullin (ADM and ADM2). Ligand binding causes a conformation change that triggers signaling via guanine nucleotide-binding proteins (G proteins) and modulates the activity of downstream effectors. Activates cAMP-dependent pathway. This Rattus norvegicus (Rat) protein is Calcitonin gene-related peptide type 1 receptor.